Here is a 201-residue protein sequence, read N- to C-terminus: Nucleoid occlusion factor SlmA (201 aa).

In terms of domain architecture, HTH tetR-type spans 14 to 75; that stretch reads KERQQQVLEV…ALIERIEMTL (62 aa). The H-T-H motif DNA-binding region spans 38 to 57; the sequence is TTERLSKAVGVSEGALYRYF.

It belongs to the nucleoid occlusion factor SlmA family. As to quaternary structure, homodimer. Interacts with FtsZ.

The protein resides in the cytoplasm. Its subcellular location is the nucleoid. In terms of biological role, required for nucleoid occlusion (NO) phenomenon, which prevents Z-ring formation and cell division over the nucleoid. Acts as a DNA-associated cell division inhibitor that binds simultaneously chromosomal DNA and FtsZ, and disrupts the assembly of FtsZ polymers. SlmA-DNA-binding sequences (SBS) are dispersed on non-Ter regions of the chromosome, preventing FtsZ polymerization at these regions. The chain is Nucleoid occlusion factor SlmA from Glaesserella parasuis serovar 5 (strain SH0165) (Haemophilus parasuis).